The chain runs to 448 residues: Neurexin-1b-beta (448 aa).

A signal peptide spans 1-38; the sequence is MFGGWRLVVWQIFSEIITRRLGFWICLYFAALSVGMIS. The Extracellular portion of the chain corresponds to 39-375; sequence GSEPLVRTRH…EVFRESNGTT (337 aa). The Laminin G-like domain maps to 71-269; sequence STYVFGRQGG…DPNVRMEGSV (199 aa). A helical membrane pass occupies residues 376–396; sequence GMVVGIVAGAALCILILLYAM. Residues 397–448 lie on the Cytoplasmic side of the membrane; that stretch reads YKYRNRDEGSYHVDESRNYICNSNGAALKEKNTADDDSGSKSKKNKNKEYYV. Positions 426–436 are enriched in basic and acidic residues; that stretch reads EKNTADDDSGS. The interval 426 to 448 is disordered; that stretch reads EKNTADDDSGSKSKKNKNKEYYV.

It belongs to the neurexin family.

The protein localises to the membrane. In terms of biological role, neuronal cell surface protein that may be involved in cell recognition and cell adhesion. May play a role in formation or maintenance of synaptic junctions. The sequence is that of Neurexin-1b-beta (nrxn1b) from Danio rerio (Zebrafish).